Here is a 393-residue protein sequence, read N- to C-terminus: S-adenosylmethionine synthase 2 (393 aa).

Residue E9 participates in Mg(2+) binding. H15 lines the ATP pocket. E43 contacts K(+). L-methionine is bound by residues E56 and Q99. Residues 167–169 (DGK), 235–238 (SGRF), D246, 252–253 (RK), A269, K273, and K277 each bind ATP. Residue D246 participates in L-methionine binding. K277 is a binding site for L-methionine.

It belongs to the AdoMet synthase family. As to quaternary structure, homotetramer. Mn(2+) serves as cofactor. Requires Mg(2+) as cofactor. Co(2+) is required as a cofactor. It depends on K(+) as a cofactor. The cofactor is NH4(+). In terms of tissue distribution, mostly expressed in roots, and, to a lower extent, in hypocotyls and cotyledons.

Its subcellular location is the cytoplasm. It carries out the reaction L-methionine + ATP + H2O = S-adenosyl-L-methionine + phosphate + diphosphate. It participates in amino-acid biosynthesis; S-adenosyl-L-methionine biosynthesis; S-adenosyl-L-methionine from L-methionine: step 1/1. Its activity is regulated as follows. Inhibited by products of SAMS reaction (SAM, Pi, PPi), substrate analogs (cycloleucine and ethionine), and alternative nucleotides (GTP, CTP and ADP). Strongly repressed by PPPi. Catalyzes the formation of S-adenosylmethionine from methionine and ATP. The reaction comprises two steps that are both catalyzed by the same enzyme: formation of S-adenosylmethionine (AdoMet) and triphosphate, and subsequent hydrolysis of the triphosphate. The sequence is that of S-adenosylmethionine synthase 2 (SAMS2) from Catharanthus roseus (Madagascar periwinkle).